Reading from the N-terminus, the 261-residue chain is Small ribosomal subunit protein mS23 (261 aa).

Positions R233 to L261 are disordered.

This sequence belongs to the mitochondrion-specific ribosomal protein mS23 family. As to quaternary structure, component of the mitochondrial small ribosomal subunit.

The protein resides in the mitochondrion. This is Small ribosomal subunit protein mS23 (RSM25) from Kluyveromyces lactis (strain ATCC 8585 / CBS 2359 / DSM 70799 / NBRC 1267 / NRRL Y-1140 / WM37) (Yeast).